The primary structure comprises 288 residues: uncharacterized protein (288 aa).

This is an uncharacterized protein from Haemophilus influenzae (strain ATCC 51907 / DSM 11121 / KW20 / Rd).